Here is a 623-residue protein sequence, read N- to C-terminus: Leucine aminopeptidase 2 (623 aa).

A peptide-binding positions include 136 to 138 (QCE) and 261 to 266 (PYGGME). Histidine 290 contacts Zn(2+). The active-site Proton acceptor is the glutamate 291. 2 residues coordinate Zn(2+): histidine 294 and glutamate 313. The active-site Proton donor is tyrosine 391.

It belongs to the peptidase M1 family. Requires Zn(2+) as cofactor.

The protein resides in the cytoplasm. Its subcellular location is the nucleus. The catalysed reaction is an epoxide + H2O = an ethanediol. Aminopeptidase that preferentially cleaves di- and tripeptides. Also has low epoxide hydrolase activity (in vitro). Can hydrolyze the epoxide leukotriene LTA(4) but it forms preferentially 5,6-dihydroxy-7,9,11,14-eicosatetraenoic acid rather than the cytokine leukotriene B(4) as the product compared to the homologous mammalian enzyme (in vitro). The protein is Leucine aminopeptidase 2 (LKH1) of Candida albicans (strain SC5314 / ATCC MYA-2876) (Yeast).